A 26-amino-acid chain; its full sequence is Fumarylacetoacetate hydrolase domain-containing protein 2A (26 aa).

It belongs to the FAH family. The cofactor is Ca(2+). Mg(2+) is required as a cofactor.

Functionally, may have hydrolase activity. In Mesocricetus auratus (Golden hamster), this protein is Fumarylacetoacetate hydrolase domain-containing protein 2A.